We begin with the raw amino-acid sequence, 565 residues long: Small ribosomal subunit protein bS1 (565 aa).

S1 motif domains are found at residues 30-96 (SSVI…LSRD), 114-180 (NEKV…VSRR), 201-269 (GQVI…LGMK), 286-356 (NARF…LGLK), 373-443 (GSTV…LGVK), and 454-529 (GDVK…VSIK).

Belongs to the bacterial ribosomal protein bS1 family. Post-translationally, the initiator methionine may be removed.

In terms of biological role, binds mRNA; thus facilitating recognition of the initiation point. It is needed to translate mRNA with a short Shine-Dalgarno (SD) purine-rich sequence. In Rhodopseudomonas palustris (strain ATCC BAA-98 / CGA009), this protein is Small ribosomal subunit protein bS1 (rpsA).